The primary structure comprises 182 residues: Ribosome maturation factor RimM (182 aa).

The 80-residue stretch at 103-182 (EDDYYWKDLM…RVEVDWDPGF (80 aa)) folds into the PRC barrel domain.

The protein belongs to the RimM family. In terms of assembly, binds ribosomal protein uS19.

The protein localises to the cytoplasm. An accessory protein needed during the final step in the assembly of 30S ribosomal subunit, possibly for assembly of the head region. Essential for efficient processing of 16S rRNA. May be needed both before and after RbfA during the maturation of 16S rRNA. It has affinity for free ribosomal 30S subunits but not for 70S ribosomes. The sequence is that of Ribosome maturation factor RimM from Yersinia pestis (strain Pestoides F).